A 225-amino-acid polypeptide reads, in one-letter code: Pyridoxine/pyridoxamine 5'-phosphate oxidase (225 aa).

Substrate is bound by residues 21-24 and lysine 79; that span reads RKSY. Residues 74-79, 89-90, arginine 95, and lysine 96 contribute to the FMN site; these read RVVLIK and YT. The substrate site is built by tyrosine 136, arginine 140, and serine 144. FMN-binding positions include 153–154 and tryptophan 197; that span reads QS. Residue 203–205 participates in substrate binding; sequence RLH. Residue arginine 207 coordinates FMN.

It belongs to the pyridoxamine 5'-phosphate oxidase family. As to quaternary structure, homodimer. Requires FMN as cofactor.

The enzyme catalyses pyridoxamine 5'-phosphate + O2 + H2O = pyridoxal 5'-phosphate + H2O2 + NH4(+). The catalysed reaction is pyridoxine 5'-phosphate + O2 = pyridoxal 5'-phosphate + H2O2. It functions in the pathway cofactor metabolism; pyridoxal 5'-phosphate salvage; pyridoxal 5'-phosphate from pyridoxamine 5'-phosphate: step 1/1. The protein operates within cofactor metabolism; pyridoxal 5'-phosphate salvage; pyridoxal 5'-phosphate from pyridoxine 5'-phosphate: step 1/1. Functionally, catalyzes the oxidation of either pyridoxine 5'-phosphate (PNP) or pyridoxamine 5'-phosphate (PMP) into pyridoxal 5'-phosphate (PLP). The sequence is that of Pyridoxine/pyridoxamine 5'-phosphate oxidase from Paracidovorax citrulli (strain AAC00-1) (Acidovorax citrulli).